Consider the following 116-residue polypeptide: MASKTLLLLGLFAFLFIVSEMAAAGTVKSESEETVKPEQHGGGFGDNGGGRYQGGGGHGGHGGGGYQGGGGRYQGGGGRQGGGGSYCRHGCCYKGYHGCSRCCSYAGEAVQTQSGH.

The signal sequence occupies residues 1–24 (MASKTLLLLGLFAFLFIVSEMAAA). The disordered stretch occupies residues 27–83 (VKSESEETVKPEQHGGGFGDNGGGRYQGGGGHGGHGGGGYQGGGGRYQGGGGRQGGG). Residues 29–39 (SESEETVKPEQ) show a composition bias toward basic and acidic residues. Over residues 40–83 (HGGGFGDNGGGRYQGGGGHGGHGGGGYQGGGGRYQGGGGRQGGG) the composition is skewed to gly residues. 5 tandem repeats follow at residues 54 to 59 (GGGGHG), 62 to 67 (GGGGYQ), 68 to 73 (GGGGRY), 75 to 80 (GGGGRQ), and 81 to 86 (GGGGSY). The tract at residues 54–86 (GGGGHGGHGGGGYQGGGGRYQGGGGRQGGGGSY) is 5 X 6 AA tandem repeats of G-G-G-G-[HYRS]-[GYQ].

It belongs to the GRP family. In terms of assembly, interacts with WAK1 (via the extracellular domain). Component of a 500 kDa complex, composed of GRP3 or GRP3-S, WAK1 and KAPP.

It localises to the secreted. The protein resides in the extracellular space. Its subcellular location is the extracellular matrix. Its function is as follows. Regulates the function of the receptor protein kinase WAK1. The polypeptide is Glycine-rich protein 3 short isoform (GRP3S) (Arabidopsis thaliana (Mouse-ear cress)).